The chain runs to 109 residues: uncharacterized protein (109 aa).

The helical transmembrane segment at isoleucine 90 to glutamine 107 threads the bilayer.

It is found in the membrane. This is an uncharacterized protein from Saccharomyces cerevisiae (strain ATCC 204508 / S288c) (Baker's yeast).